The sequence spans 778 residues: LPS-assembly protein LptD (778 aa).

Residues Met1–Ala23 form the signal peptide.

Belongs to the LptD family. As to quaternary structure, component of the lipopolysaccharide transport and assembly complex. Interacts with LptE and LptA.

The protein resides in the cell outer membrane. Its function is as follows. Together with LptE, is involved in the assembly of lipopolysaccharide (LPS) at the surface of the outer membrane. The chain is LPS-assembly protein LptD from Actinobacillus pleuropneumoniae serotype 5b (strain L20).